An 808-amino-acid polypeptide reads, in one-letter code: Aminotransferase ALT4 (808 aa).

Belongs to the class-II pyridoxal-phosphate-dependent aminotransferase family. BioF subfamily. Requires pyridoxal 5'-phosphate as cofactor.

The protein operates within mycotoxin biosynthesis. In terms of biological role, aminotransferase; part of the gene cluster that mediates the biosynthesis of the host-selective toxins (HSTs) AAL-toxins, sphinganine-analog mycotoxins responsible for Alternaria stem canker on tomato by the tomato pathotype. The biosynthesis starts with the polyketide synthase ALT1-catalyzed C-16 carbon chain assembly from one starter acetyl-CoA unit with malonyl-CoA extender units. ALT1 also selectively transfers methyl groups at the first and the third cycle of chain elongation for AAL toxin. The C-16 polyketide chain is released from the enzyme by a nucleophilic attack of a carbanion, which is derived from R-carbon of glycin by decarboxylation, on the carbonyl carbon of polyketide acyl chain. This step is probably catalyzed by a pyridoxal 5'-phosphate-dependent aminoacyl transferase ALT4. The respective functions of the other enzymes encoded by the cluster have still to be elucidated. The sphingosine N-acyltransferase-like protein ALT7 seems not to act as a resistance/self-tolerance factor against the toxin in the toxin biosynthetic gene cluster, contrary to what is expected. In Alternaria alternata (Alternaria rot fungus), this protein is Aminotransferase ALT4.